Consider the following 399-residue polypeptide: Carbamoyl phosphate synthase small chain (399 aa).

The segment at 1–206 (MTQTIPSPKP…NKGYKTNNDA (206 aa)) is CPSase. Residues S60, G258, and G260 each coordinate L-glutamine. The Glutamine amidotransferase type-1 domain maps to 210–398 (HIVAIDYGIK…FNLIMDYKKT (189 aa)). C287 (nucleophile) is an active-site residue. The L-glutamine site is built by L288, Q291, N329, G331, and F332. Active-site residues include H371 and E373.

This sequence belongs to the CarA family. As to quaternary structure, composed of two chains; the small (or glutamine) chain promotes the hydrolysis of glutamine to ammonia, which is used by the large (or ammonia) chain to synthesize carbamoyl phosphate. Tetramer of heterodimers (alpha,beta)4.

The enzyme catalyses hydrogencarbonate + L-glutamine + 2 ATP + H2O = carbamoyl phosphate + L-glutamate + 2 ADP + phosphate + 2 H(+). It carries out the reaction L-glutamine + H2O = L-glutamate + NH4(+). Its pathway is amino-acid biosynthesis; L-arginine biosynthesis; carbamoyl phosphate from bicarbonate: step 1/1. It functions in the pathway pyrimidine metabolism; UMP biosynthesis via de novo pathway; (S)-dihydroorotate from bicarbonate: step 1/3. Functionally, small subunit of the glutamine-dependent carbamoyl phosphate synthetase (CPSase). CPSase catalyzes the formation of carbamoyl phosphate from the ammonia moiety of glutamine, carbonate, and phosphate donated by ATP, constituting the first step of 2 biosynthetic pathways, one leading to arginine and/or urea and the other to pyrimidine nucleotides. The small subunit (glutamine amidotransferase) binds and cleaves glutamine to supply the large subunit with the substrate ammonia. This is Carbamoyl phosphate synthase small chain from Bartonella henselae (strain ATCC 49882 / DSM 28221 / CCUG 30454 / Houston 1) (Rochalimaea henselae).